A 190-amino-acid chain; its full sequence is Xanthine phosphoribosyltransferase (190 aa).

The xanthine site is built by L20 and N27. 128 to 132 is a 5-phospho-alpha-D-ribose 1-diphosphate binding site; sequence ANGKA. K156 contributes to the xanthine binding site.

This sequence belongs to the purine/pyrimidine phosphoribosyltransferase family. Xpt subfamily. Homodimer.

Its subcellular location is the cytoplasm. It catalyses the reaction XMP + diphosphate = xanthine + 5-phospho-alpha-D-ribose 1-diphosphate. It participates in purine metabolism; XMP biosynthesis via salvage pathway; XMP from xanthine: step 1/1. Functionally, converts the preformed base xanthine, a product of nucleic acid breakdown, to xanthosine 5'-monophosphate (XMP), so it can be reused for RNA or DNA synthesis. The polypeptide is Xanthine phosphoribosyltransferase (Pseudomonas fluorescens (strain SBW25)).